Consider the following 233-residue polypeptide: C-type lectin domain family 2 member D2 (233 aa).

The interval 1–34 (MPSSAHLQDAPPLLSRTLTQDEEQTSLRQSSSCG) is disordered. The Cytoplasmic portion of the chain corresponds to 1–76 (MPSSAHLQDA…SPESPAKLPC (76 aa)). A helical; Signal-anchor for type II membrane protein membrane pass occupies residues 77 to 97 (CYGVIMVLSVAVVALSVALSV). The Extracellular segment spans residues 98–233 (KKTPQILTVK…KPNSYTSQCQ (136 aa)). A C-type lectin domain is found at 119–228 (VGNKCYYFNE…KSICSKPNSY (110 aa)). Asn-132 is a glycosylation site (N-linked (GlcNAc...) asparagine).

Its subcellular location is the cell membrane. Lectin-type cell surface receptor. This is C-type lectin domain family 2 member D2 (Clec2d2) from Rattus norvegicus (Rat).